Reading from the N-terminus, the 230-residue chain is Flavin-dependent thymidylate synthase (230 aa).

The ThyX domain maps to 1–217 (MEIKVLEKGF…PVTYEAFLNF (217 aa)). Residues S55, 78-80 (RHR), and E86 contribute to the FAD site. DUMP contacts are provided by residues 75-78 (QLVR), 86-90 (ERSGR), and R156. The ThyX motif motif lies at 78–88 (RHRIASINERS). FAD-binding positions include 172–174 (NAR) and N178. R183 is a binding site for dUMP. R183 (involved in ionization of N3 of dUMP, leading to its activation) is an active-site residue.

It belongs to the thymidylate synthase ThyX family. Homotetramer. Requires FAD as cofactor.

It carries out the reaction dUMP + (6R)-5,10-methylene-5,6,7,8-tetrahydrofolate + NADPH + H(+) = dTMP + (6S)-5,6,7,8-tetrahydrofolate + NADP(+). It participates in pyrimidine metabolism; dTTP biosynthesis. Its function is as follows. Catalyzes the reductive methylation of 2'-deoxyuridine-5'-monophosphate (dUMP) to 2'-deoxythymidine-5'-monophosphate (dTMP) while utilizing 5,10-methylenetetrahydrofolate (mTHF) as the methyl donor, and NADPH and FADH(2) as the reductant. This chain is Flavin-dependent thymidylate synthase, found in Kosmotoga olearia (strain ATCC BAA-1733 / DSM 21960 / TBF 19.5.1).